The chain runs to 1062 residues: Valine--tRNA ligase, mitochondrial (1062 aa).

The transit peptide at 1–15 (MPHLPLASFRPPLRG) directs the protein to the mitochondrion. The segment at 1-73 (MPHLPLASFR…AKGKPPAEST (73 aa)) is disordered. Positions 42-56 (RNREAKQKRLREKQA) are enriched in basic and acidic residues. The short motif at 146–156 (PNVTGSLHIGH) is the 'HIGH' region element. The short motif at 659–663 (KMSKS) is the 'KMSKS' region element. Lys-662 is a binding site for ATP.

It belongs to the class-I aminoacyl-tRNA synthetase family.

It is found in the mitochondrion. It catalyses the reaction tRNA(Val) + L-valine + ATP = L-valyl-tRNA(Val) + AMP + diphosphate. Catalyzes the attachment of valine to tRNA(Val) in a two-step reaction: valine is first activated by ATP to form Val-AMP and then transferred to the acceptor end of tRNA(Val). This is Valine--tRNA ligase, mitochondrial (VARS2) from Sus scrofa (Pig).